Reading from the N-terminus, the 344-residue chain is L-rhamnose-proton symporter (344 aa).

Transmembrane regions (helical) follow at residues 4-24, 38-58, 68-88, 101-121, 137-157, 175-195, 214-234, 259-279, 290-310, and 323-343; these read AITMGIFWHLIGAASAACFYA, WSVGGIVSWIILPWAISALLL, FSLSTLLPVFLFGAMWGIGNI, MGIGIAIGITLIVGTLMTPII, TLLGVLVALIGVGIVTRAGQL, LVLAVMCGIFSAGMSFAMNAA, LPSYVVIMGGGAIINLGFCFI, VLLSALGGLMWYLQFFFYAWG, ISWMLHMSFYVLCGGIVGLVL, and VLSLGCVVIIVAANIVGIGMA.

Belongs to the L-rhamnose transporter (TC 2.A.7.6) family.

Its subcellular location is the cell inner membrane. The catalysed reaction is L-rhamnopyranose(in) + H(+)(in) = L-rhamnopyranose(out) + H(+)(out). Uptake of L-rhamnose across the cytoplasmic membrane with the concomitant transport of protons into the cell (symport system). The sequence is that of L-rhamnose-proton symporter from Shigella dysenteriae serotype 1 (strain Sd197).